The following is a 427-amino-acid chain: Tol-Pal system protein TolB (427 aa).

The first 27 residues, 1–27 (MPVSLLRALLVFSLLCLGLSATRAAHA), serve as a signal peptide directing secretion.

It belongs to the TolB family. In terms of assembly, the Tol-Pal system is composed of five core proteins: the inner membrane proteins TolA, TolQ and TolR, the periplasmic protein TolB and the outer membrane protein Pal. They form a network linking the inner and outer membranes and the peptidoglycan layer.

It localises to the periplasm. Functionally, part of the Tol-Pal system, which plays a role in outer membrane invagination during cell division and is important for maintaining outer membrane integrity. The protein is Tol-Pal system protein TolB of Thiobacillus denitrificans (strain ATCC 25259 / T1).